A 317-amino-acid chain; its full sequence is DNA-directed RNA polymerase subunit alpha (317 aa).

Positions 1 to 234 (MKQFVRPEFI…AHLEFFIDLN (234 aa)) are alpha N-terminal domain (alpha-NTD). Residues 249–317 (DDKELDRTVE…ASLGLAFRQS (69 aa)) form an alpha C-terminal domain (alpha-CTD) region.

It belongs to the RNA polymerase alpha chain family. In terms of assembly, homodimer. The RNAP catalytic core consists of 2 alpha, 1 beta, 1 beta' and 1 omega subunit. When a sigma factor is associated with the core the holoenzyme is formed, which can initiate transcription.

The enzyme catalyses RNA(n) + a ribonucleoside 5'-triphosphate = RNA(n+1) + diphosphate. Functionally, DNA-dependent RNA polymerase catalyzes the transcription of DNA into RNA using the four ribonucleoside triphosphates as substrates. The protein is DNA-directed RNA polymerase subunit alpha of Mycoplasma capricolum subsp. capricolum (strain California kid / ATCC 27343 / NCTC 10154).